A 217-amino-acid chain; its full sequence is uncharacterized protein (217 aa).

This is an uncharacterized protein from Escherichia coli.